The sequence spans 273 residues: Proteasome subunit alpha (273 aa).

The tract at residues 231-273 is disordered; that stretch reads DDGAAGQPPSSSDTDTSAAEARKPTASAGSADLEGPEPERPDS. A compositionally biased stretch (low complexity) spans 238–249; that stretch reads PPSSSDTDTSAA.

This sequence belongs to the peptidase T1A family. In terms of assembly, the 20S proteasome core is composed of 14 alpha and 14 beta subunits that assemble into four stacked heptameric rings, resulting in a barrel-shaped structure. The two inner rings, each composed of seven catalytic beta subunits, are sandwiched by two outer rings, each composed of seven alpha subunits. The catalytic chamber with the active sites is on the inside of the barrel. Has a gated structure, the ends of the cylinder being occluded by the N-termini of the alpha-subunits. Is capped by the proteasome-associated ATPase, ARC.

Its subcellular location is the cytoplasm. It functions in the pathway protein degradation; proteasomal Pup-dependent pathway. Its activity is regulated as follows. The formation of the proteasomal ATPase ARC-20S proteasome complex, likely via the docking of the C-termini of ARC into the intersubunit pockets in the alpha-rings, may trigger opening of the gate for substrate entry. Interconversion between the open-gate and close-gate conformations leads to a dynamic regulation of the 20S proteasome proteolysis activity. Component of the proteasome core, a large protease complex with broad specificity involved in protein degradation. The protein is Proteasome subunit alpha of Salinispora arenicola (strain CNS-205).